Reading from the N-terminus, the 205-residue chain is Thiamine-phosphate synthase (205 aa).

Residues 37–41 (QVREK) and asparagine 69 each bind 4-amino-2-methyl-5-(diphosphooxymethyl)pyrimidine. Positions 70 and 89 each coordinate Mg(2+). Serine 108 is a binding site for 4-amino-2-methyl-5-(diphosphooxymethyl)pyrimidine. 134–136 (TGS) provides a ligand contact to 2-[(2R,5Z)-2-carboxy-4-methylthiazol-5(2H)-ylidene]ethyl phosphate. Residue lysine 137 coordinates 4-amino-2-methyl-5-(diphosphooxymethyl)pyrimidine. 2-[(2R,5Z)-2-carboxy-4-methylthiazol-5(2H)-ylidene]ethyl phosphate-binding positions include glycine 165 and 185-186 (IS).

This sequence belongs to the thiamine-phosphate synthase family. Mg(2+) serves as cofactor.

It carries out the reaction 2-[(2R,5Z)-2-carboxy-4-methylthiazol-5(2H)-ylidene]ethyl phosphate + 4-amino-2-methyl-5-(diphosphooxymethyl)pyrimidine + 2 H(+) = thiamine phosphate + CO2 + diphosphate. The enzyme catalyses 2-(2-carboxy-4-methylthiazol-5-yl)ethyl phosphate + 4-amino-2-methyl-5-(diphosphooxymethyl)pyrimidine + 2 H(+) = thiamine phosphate + CO2 + diphosphate. It catalyses the reaction 4-methyl-5-(2-phosphooxyethyl)-thiazole + 4-amino-2-methyl-5-(diphosphooxymethyl)pyrimidine + H(+) = thiamine phosphate + diphosphate. It functions in the pathway cofactor biosynthesis; thiamine diphosphate biosynthesis; thiamine phosphate from 4-amino-2-methyl-5-diphosphomethylpyrimidine and 4-methyl-5-(2-phosphoethyl)-thiazole: step 1/1. Condenses 4-methyl-5-(beta-hydroxyethyl)thiazole monophosphate (THZ-P) and 2-methyl-4-amino-5-hydroxymethyl pyrimidine pyrophosphate (HMP-PP) to form thiamine monophosphate (TMP). The polypeptide is Thiamine-phosphate synthase (Clostridium botulinum (strain Loch Maree / Type A3)).